We begin with the raw amino-acid sequence, 1137 residues long: Nonsense-mediated mRNA decay factor SMG7 (1137 aa).

Position 2 is an N-acetylserine (serine 2). TPR repeat units lie at residues 152–185 and 187–219; these read QHCL…VPSN and QPYN…KFPF. Serine 520 carries the phosphoserine modification. Basic and acidic residues predominate over residues 620–631; sequence ELRKTPVSEARK. 6 disordered regions span residues 620 to 646, 696 to 794, 890 to 911, 988 to 1055, 1069 to 1089, and 1104 to 1137; these read ELRK…NSQF, LQPT…YQQA, IDRR…VPRM, PSLP…AMGG, SSWH…PSME, and SSSM…NPPH. A Phosphothreonine modification is found at threonine 624. 2 stretches are compositionally biased toward polar residues: residues 633-646 and 696-722; these read PVTQ…NSQF and LQPT…SQQR. Residues 723-770 show a composition bias toward low complexity; the sequence is PSGPGPMNQGPQQSQPPSQQPLTSLPAQPTAQSTSQLQVQALTQQQQS. 2 positions are modified to phosphoserine: serine 781 and serine 897. A compositionally biased stretch (polar residues) spans 988 to 998; sequence PSLPASSDHST. Residues 999-1025 show a composition bias toward low complexity; it reads PASQSPHSSNPSSLPSSPPTHNHNSVP. Positions 1036–1050 are enriched in basic and acidic residues; it reads DNRDRRTADRWKTDK. Polar residues predominate over residues 1069–1081; the sequence is SSWHQASTPSGTW. Residues 1117–1131 are compositionally biased toward low complexity; that stretch reads QLLMQQKQKQQRGQG.

As to quaternary structure, part of a complex that contains SMG5, SMG7, PPP2CA, a short isoform of UPF3A (isoform UPF3AS, but not isoform UPF3AL) and phosphorylated UPF1. Interacts with DHX34; the interaction is RNA-independent.

It localises to the cytoplasm. It is found in the nucleus. Functionally, plays a role in nonsense-mediated mRNA decay. Recruits UPF1 to cytoplasmic mRNA decay bodies. Together with SMG5 is thought to provide a link to the mRNA degradation machinery involving exonucleolytic pathways, and to serve as an adapter for UPF1 to protein phosphatase 2A (PP2A), thereby triggering UPF1 dephosphorylation. The polypeptide is Nonsense-mediated mRNA decay factor SMG7 (Homo sapiens (Human)).